The primary structure comprises 365 residues: Fucose-specific lectin (365 aa).

Residues Met1–Ala21 form the signal peptide. Repeat copies occupy residues Gln22 to Ile79, Ala80 to Asn141, Phe142 to Asn206, Phe207 to Ala261, Lys262 to Phe309, and Glu310 to Ala365. A 6 X approximate tandem repeats region spans residues Gln22–Ala365. Asn26 carries N-linked (GlcNAc...) asparagine glycosylation. Residues Arg51, Glu63, and Trp70 each coordinate beta-L-fucose. N-linked (GlcNAc...) asparagine glycans are attached at residues Asn76 and Asn85. A beta-L-fucose-binding site is contributed by Arg111. N-linked (GlcNAc...) asparagine glycosylation occurs at Asn118. 6 residues coordinate beta-L-fucose: Glu123, Trp132, Arg164, Glu176, Trp201, and Arg231. Asn248 carries N-linked (GlcNAc...) asparagine glycosylation. 3 residues coordinate beta-L-fucose: Arg283, Arg333, and Glu347.

The protein belongs to the fungal fucose-specific lectin family. Homodimer.

The protein resides in the secreted. Probable L-fucose-binding lectin. This is Fucose-specific lectin from Arthroderma benhamiae (strain ATCC MYA-4681 / CBS 112371) (Trichophyton mentagrophytes).